Here is a 165-residue protein sequence, read N- to C-terminus: Ubiquitin-fold modifier-conjugating enzyme 1 (165 aa).

The active-site Glycyl thioester intermediate is Cys-116.

Belongs to the ubiquitin-conjugating enzyme family. UFC1 subfamily.

In terms of biological role, E2-like enzyme which forms an intermediate with UFM1 via a thioester linkage. The protein is Ubiquitin-fold modifier-conjugating enzyme 1 of Drosophila mojavensis (Fruit fly).